The chain runs to 222 residues: Thymidylate kinase (222 aa).

Glycine 7–serine 14 provides a ligand contact to ATP.

This sequence belongs to the thymidylate kinase family.

The enzyme catalyses dTMP + ATP = dTDP + ADP. Its function is as follows. Phosphorylation of dTMP to form dTDP in both de novo and salvage pathways of dTTP synthesis. In Chlorobium chlorochromatii (strain CaD3), this protein is Thymidylate kinase.